Here is a 333-residue protein sequence, read N- to C-terminus: Zinc-type alcohol dehydrogenase-like protein SACOL2177 (333 aa).

Belongs to the zinc-containing alcohol dehydrogenase family. Quinone oxidoreductase subfamily.

The chain is Zinc-type alcohol dehydrogenase-like protein SACOL2177 from Staphylococcus aureus (strain COL).